The primary structure comprises 150 residues: Large ribosomal subunit protein bL9 (150 aa).

The protein belongs to the bacterial ribosomal protein bL9 family.

Functionally, binds to the 23S rRNA. The protein is Large ribosomal subunit protein bL9 of Hamiltonella defensa subsp. Acyrthosiphon pisum (strain 5AT).